Here is a 141-residue protein sequence, read N- to C-terminus: MAKKIIGFIKLQIPAGAANPAPPVGPALGQKGVNIMEFCKQFNAKTQAEAGMITPVVITVYSDKSFTFITKTPPAAVLLLKEAQLKKGSGEPNRNKVGTVSREQVRRIAELKMPDLNAVDVAGAEQMVMGTARSMGIVVEN.

The protein belongs to the universal ribosomal protein uL11 family. Part of the ribosomal stalk of the 50S ribosomal subunit. Interacts with L10 and the large rRNA to form the base of the stalk. L10 forms an elongated spine to which L12 dimers bind in a sequential fashion forming a multimeric L10(L12)X complex. One or more lysine residues are methylated.

Its function is as follows. Forms part of the ribosomal stalk which helps the ribosome interact with GTP-bound translation factors. The protein is Large ribosomal subunit protein uL11 of Chlorobium phaeobacteroides (strain DSM 266 / SMG 266 / 2430).